A 172-amino-acid polypeptide reads, in one-letter code: Shikimate kinase (172 aa).

G8–T15 lines the ATP pocket.

Belongs to the shikimate kinase family.

The protein localises to the cytoplasm. The enzyme catalyses shikimate + ATP = 3-phosphoshikimate + ADP + H(+). Its pathway is metabolic intermediate biosynthesis; chorismate biosynthesis; chorismate from D-erythrose 4-phosphate and phosphoenolpyruvate: step 5/7. This is Shikimate kinase from Oleidesulfovibrio alaskensis (strain ATCC BAA-1058 / DSM 17464 / G20) (Desulfovibrio alaskensis).